A 114-amino-acid chain; its full sequence is UPF0102 protein HPAG1_0809 (114 aa).

This sequence belongs to the UPF0102 family.

The polypeptide is UPF0102 protein HPAG1_0809 (Helicobacter pylori (strain HPAG1)).